Here is a 143-residue protein sequence, read N- to C-terminus: Antiholin-like protein LrgA (143 aa).

4 helical membrane-spanning segments follow: residues 6-26, 30-50, 61-81, and 97-117; these read VYSF…SNII, LPIP…LLCL, LGTA…ISVI, and VIVV…QFIL.

Belongs to the CidA/LrgA family. LrgA subfamily.

It localises to the cell membrane. Functionally, inhibits the expression or activity of extracellular murein hydrolases by interacting, possibly with LrgB, with the holin-like protein CidA. The LrgAB and CidA proteins may affect the proton motive force of the membrane. May be involved in programmed cell death (PCD), possibly triggering PCD in response to antibiotics and environmental stresses. This chain is Antiholin-like protein LrgA, found in Bacillus cereus (strain AH187).